The primary structure comprises 281 residues: Small ribosomal subunit biogenesis GTPase RsgA (281 aa).

Residues 59–212 (QNEFIRPKVA…LIDTPGFSSL (154 aa)) enclose the CP-type G domain. GTP contacts are provided by residues 108–111 (TKAD) and 155–163 (GQSGVGKTT). Residues cysteine 235, cysteine 240, histidine 242, and cysteine 250 each coordinate Zn(2+).

It belongs to the TRAFAC class YlqF/YawG GTPase family. RsgA subfamily. As to quaternary structure, monomer. Associates with 30S ribosomal subunit, binds 16S rRNA. Zn(2+) serves as cofactor.

It is found in the cytoplasm. Its function is as follows. One of several proteins that assist in the late maturation steps of the functional core of the 30S ribosomal subunit. Helps release RbfA from mature subunits. May play a role in the assembly of ribosomal proteins into the subunit. Circularly permuted GTPase that catalyzes slow GTP hydrolysis, GTPase activity is stimulated by the 30S ribosomal subunit. The protein is Small ribosomal subunit biogenesis GTPase RsgA of Mycoplasmopsis agalactiae (strain NCTC 10123 / CIP 59.7 / PG2) (Mycoplasma agalactiae).